A 284-amino-acid chain; its full sequence is RNase adapter protein RapZ (284 aa).

8–15 (GRSGSGKS) is an ATP binding site. 56-59 (DVRN) lines the GTP pocket. The segment at 266-284 (RSRGKNVQLRHRTLEKRKE) is RNA-binding.

Belongs to the RapZ-like family. RapZ subfamily. As to quaternary structure, homotrimer.

In terms of biological role, modulates the synthesis of GlmS, by affecting the processing and stability of the regulatory small RNA GlmZ. When glucosamine-6-phosphate (GlcN6P) concentrations are high in the cell, RapZ binds GlmZ and targets it to cleavage by RNase E. Consequently, GlmZ is inactivated and unable to activate GlmS synthesis. Under low GlcN6P concentrations, RapZ is sequestered and inactivated by an other regulatory small RNA, GlmY, preventing GlmZ degradation and leading to synthesis of GlmS. The polypeptide is RNase adapter protein RapZ (Hamiltonella defensa subsp. Acyrthosiphon pisum (strain 5AT)).